The chain runs to 191 residues: Thymidylate kinase (191 aa).

Position 7 to 14 (7 to 14) interacts with ATP; it reads GVDGVGKS.

It belongs to the thymidylate kinase family.

It carries out the reaction dTMP + ATP = dTDP + ADP. In terms of biological role, phosphorylation of dTMP to form dTDP in both de novo and salvage pathways of dTTP synthesis. The sequence is that of Thymidylate kinase from Helicobacter pylori (strain HPAG1).